A 1151-amino-acid polypeptide reads, in one-letter code: uncharacterized protein (1151 aa).

5 disordered regions span residues 611 to 633, 709 to 740, 753 to 778, 795 to 880, and 1060 to 1151; these read FVKG…DEEE, NLVP…IMEV, PPIL…KSIL, PPVI…PPKL, and LKEP…TQQE. Composition is skewed to pro residues over residues 754–773 and 811–842; these read PILP…PQEP and IVPP…PSQP. Residues 867–878 are compositionally biased toward low complexity; sequence PITPDTPAITPP. Acidic residues predominate over residues 1082 to 1091; the sequence is ESDNEDDELD. Residues 1131–1142 are compositionally biased toward polar residues; sequence PVDTSDATKIST.

This is an uncharacterized protein from Ostreid herpesvirus 1 (isolate France) (OsHV-1).